The following is a 293-amino-acid chain: 1D-myo-inositol 2-acetamido-2-deoxy-alpha-D-glucopyranoside deacetylase 2 (293 aa).

The Zn(2+) site is built by H6, D9, and H142.

The protein belongs to the MshB deacetylase family. Requires Zn(2+) as cofactor.

It catalyses the reaction 1D-myo-inositol 2-acetamido-2-deoxy-alpha-D-glucopyranoside + H2O = 1D-myo-inositol 2-amino-2-deoxy-alpha-D-glucopyranoside + acetate. Functionally, catalyzes the deacetylation of 1D-myo-inositol 2-acetamido-2-deoxy-alpha-D-glucopyranoside (GlcNAc-Ins) in the mycothiol biosynthesis pathway. The protein is 1D-myo-inositol 2-acetamido-2-deoxy-alpha-D-glucopyranoside deacetylase 2 of Frankia alni (strain DSM 45986 / CECT 9034 / ACN14a).